The following is a 481-amino-acid chain: Protein nucleotidyltransferase YdiU (481 aa).

Glycine 85, glycine 87, arginine 88, lysine 108, aspartate 120, glycine 121, arginine 172, and arginine 179 together coordinate ATP. Catalysis depends on aspartate 248, which acts as the Proton acceptor. Mg(2+) contacts are provided by asparagine 249 and aspartate 258. Aspartate 258 is a binding site for ATP.

The protein belongs to the SELO family. Mg(2+) is required as a cofactor. The cofactor is Mn(2+).

The catalysed reaction is L-seryl-[protein] + ATP = 3-O-(5'-adenylyl)-L-seryl-[protein] + diphosphate. It carries out the reaction L-threonyl-[protein] + ATP = 3-O-(5'-adenylyl)-L-threonyl-[protein] + diphosphate. The enzyme catalyses L-tyrosyl-[protein] + ATP = O-(5'-adenylyl)-L-tyrosyl-[protein] + diphosphate. It catalyses the reaction L-histidyl-[protein] + UTP = N(tele)-(5'-uridylyl)-L-histidyl-[protein] + diphosphate. The catalysed reaction is L-seryl-[protein] + UTP = O-(5'-uridylyl)-L-seryl-[protein] + diphosphate. It carries out the reaction L-tyrosyl-[protein] + UTP = O-(5'-uridylyl)-L-tyrosyl-[protein] + diphosphate. Functionally, nucleotidyltransferase involved in the post-translational modification of proteins. It can catalyze the addition of adenosine monophosphate (AMP) or uridine monophosphate (UMP) to a protein, resulting in modifications known as AMPylation and UMPylation. The protein is Protein nucleotidyltransferase YdiU of Cereibacter sphaeroides (strain ATCC 17025 / ATH 2.4.3) (Rhodobacter sphaeroides).